Reading from the N-terminus, the 360-residue chain is 3-dehydroquinate synthase (360 aa).

Residues 106-110 (GVIGD), 130-131 (TS), lysine 143, and lysine 152 each bind NAD(+). Positions 185, 246, and 262 each coordinate Zn(2+).

This sequence belongs to the sugar phosphate cyclases superfamily. Dehydroquinate synthase family. Co(2+) is required as a cofactor. The cofactor is Zn(2+). It depends on NAD(+) as a cofactor.

The protein resides in the cytoplasm. It carries out the reaction 7-phospho-2-dehydro-3-deoxy-D-arabino-heptonate = 3-dehydroquinate + phosphate. Its pathway is metabolic intermediate biosynthesis; chorismate biosynthesis; chorismate from D-erythrose 4-phosphate and phosphoenolpyruvate: step 2/7. In terms of biological role, catalyzes the conversion of 3-deoxy-D-arabino-heptulosonate 7-phosphate (DAHP) to dehydroquinate (DHQ). This chain is 3-dehydroquinate synthase, found in Leuconostoc citreum (strain KM20).